The sequence spans 428 residues: D-amino acid dehydrogenase (428 aa).

Valine 3–tyrosine 17 is an FAD binding site.

This sequence belongs to the DadA oxidoreductase family. It depends on FAD as a cofactor.

It catalyses the reaction a D-alpha-amino acid + A + H2O = a 2-oxocarboxylate + AH2 + NH4(+). Its pathway is amino-acid degradation; D-alanine degradation; NH(3) and pyruvate from D-alanine: step 1/1. Its function is as follows. Oxidative deamination of D-amino acids. The chain is D-amino acid dehydrogenase from Burkholderia ambifaria (strain MC40-6).